Reading from the N-terminus, the 305-residue chain is Acetylglutamate kinase (305 aa).

Residues 78-79 (GG), Arg100, and Asn202 contribute to the substrate site.

The protein belongs to the acetylglutamate kinase family. ArgB subfamily.

Its subcellular location is the cytoplasm. It carries out the reaction N-acetyl-L-glutamate + ATP = N-acetyl-L-glutamyl 5-phosphate + ADP. Its pathway is amino-acid biosynthesis; L-arginine biosynthesis; N(2)-acetyl-L-ornithine from L-glutamate: step 2/4. Its function is as follows. Catalyzes the ATP-dependent phosphorylation of N-acetyl-L-glutamate. The sequence is that of Acetylglutamate kinase from Polaromonas sp. (strain JS666 / ATCC BAA-500).